The following is a 95-amino-acid chain: Large ribosomal subunit protein bL25 (95 aa).

This sequence belongs to the bacterial ribosomal protein bL25 family. As to quaternary structure, part of the 50S ribosomal subunit; part of the 5S rRNA/L5/L18/L25 subcomplex. Contacts the 5S rRNA. Binds to the 5S rRNA independently of L5 and L18.

This is one of the proteins that binds to the 5S RNA in the ribosome where it forms part of the central protuberance. This is Large ribosomal subunit protein bL25 from Buchnera aphidicola subsp. Acyrthosiphon pisum (strain 5A).